Here is a 110-residue protein sequence, read N- to C-terminus: Phosphoribosyl-ATP pyrophosphatase (110 aa).

The protein belongs to the PRA-PH family.

The protein resides in the cytoplasm. The enzyme catalyses 1-(5-phospho-beta-D-ribosyl)-ATP + H2O = 1-(5-phospho-beta-D-ribosyl)-5'-AMP + diphosphate + H(+). It participates in amino-acid biosynthesis; L-histidine biosynthesis; L-histidine from 5-phospho-alpha-D-ribose 1-diphosphate: step 2/9. In Clostridium novyi (strain NT), this protein is Phosphoribosyl-ATP pyrophosphatase.